The primary structure comprises 125 residues: Kappa-casein (125 aa).

The segment at 42 to 63 is disordered; sequence LPNIDPPTVERRPRPRPSFIAI. Threonine 97 carries an O-linked (GalNAc...) threonine glycan. Serine 104 bears the Phosphoserine; alternate mark. Residue serine 104 is glycosylated (O-linked (GalNAc...) serine; alternate). Residue threonine 121 is glycosylated (O-linked (GalNAc...) threonine). Serine 122 is subject to Phosphoserine.

The protein belongs to the kappa-casein family. In terms of tissue distribution, mammary gland specific. Secreted in milk.

It is found in the secreted. Kappa-casein stabilizes micelle formation, preventing casein precipitation in milk. The polypeptide is Kappa-casein (CSN3) (Lama guanicoe (Guanaco)).